The primary structure comprises 142 residues: Hemoglobin subunit alpha-A (142 aa).

The region spanning 2-142 is the Globin domain; sequence VLSAADKTNV…VGAVLTAKYR (141 aa). His59 contacts O2. His88 is a binding site for heme b.

Belongs to the globin family. In terms of assembly, heterotetramer of two alpha chains and two beta chains. In terms of tissue distribution, red blood cells.

Its function is as follows. Involved in oxygen transport from the lung to the various peripheral tissues. This is Hemoglobin subunit alpha-A (HBAA) from Mareca penelope (Eurasian wigeon).